Reading from the N-terminus, the 468-residue chain is Purple acid phosphatase 10 (468 aa).

The N-terminal stretch at 1 to 25 (MGRVRKSDFGSIVLVLCCVLNSLLC) is a signal peptide. Residues asparagine 95 and asparagine 113 are each glycosylated (N-linked (GlcNAc...) asparagine). Residue aspartate 167 participates in Fe cation binding. Asparagine 175 carries N-linked (GlcNAc...) asparagine glycosylation. Fe cation contacts are provided by aspartate 196 and tyrosine 199. Position 196 (aspartate 196) interacts with Zn(2+). Asparagine 233 serves as a coordination point for Zn(2+). Asparagine 233 contributes to the substrate binding site. N-linked (GlcNAc...) asparagine glycosylation occurs at asparagine 306. Residue histidine 318 participates in Zn(2+) binding. Histidine 328 acts as the Proton donor in catalysis. Histidine 355 is a Zn(2+) binding site. 355–357 (HVH) is a substrate binding site. Histidine 357 contacts Fe cation. A glycan (N-linked (GlcNAc...) asparagine) is linked at asparagine 428.

The protein belongs to the metallophosphoesterase superfamily. Purple acid phosphatase family. Homodimer; disulfide-linked. Requires Fe cation as cofactor. The cofactor is Zn(2+). In terms of tissue distribution, expressed in roots, stems, leaves, flowers and siliques.

It is found in the secreted. The protein resides in the cytoplasm. It carries out the reaction a phosphate monoester + H2O = an alcohol + phosphate. This Arabidopsis thaliana (Mouse-ear cress) protein is Purple acid phosphatase 10 (PAP10).